A 176-amino-acid polypeptide reads, in one-letter code: MKNKTEYYDQFISKIPNFPKKGVLFYDITSVLLKPEVYSSLINEVYSFYNFKKIDCIAVVESRGYLIGAPLSLKMQLPLVLIRKEGKLPREVFSEEYELEYGFGRIEVHKDDVRMYSNILLIDDILATGGTLKSSAILLERAGGKVKDIFCFIELCAINGRQSLESYEVNSLVRYN.

It belongs to the purine/pyrimidine phosphoribosyltransferase family. Homodimer.

It is found in the cytoplasm. The enzyme catalyses AMP + diphosphate = 5-phospho-alpha-D-ribose 1-diphosphate + adenine. The protein operates within purine metabolism; AMP biosynthesis via salvage pathway; AMP from adenine: step 1/1. Catalyzes a salvage reaction resulting in the formation of AMP, that is energically less costly than de novo synthesis. This Borreliella burgdorferi (strain ZS7) (Borrelia burgdorferi) protein is Adenine phosphoribosyltransferase.